The chain runs to 132 residues: Small ribosomal subunit protein uS8 (132 aa).

The protein belongs to the universal ribosomal protein uS8 family. As to quaternary structure, part of the 30S ribosomal subunit. Contacts proteins S5 and S12.

Functionally, one of the primary rRNA binding proteins, it binds directly to 16S rRNA central domain where it helps coordinate assembly of the platform of the 30S subunit. The protein is Small ribosomal subunit protein uS8 of Mesorhizobium japonicum (strain LMG 29417 / CECT 9101 / MAFF 303099) (Mesorhizobium loti (strain MAFF 303099)).